The primary structure comprises 451 residues: tRNA-2-methylthio-N(6)-dimethylallyladenosine synthase (451 aa).

Residues 3–120 enclose the MTTase N-terminal domain; sequence LKLHIKTYGC…LPEMINHVRI (118 aa). [4Fe-4S] cluster is bound by residues C12, C49, C83, C157, C161, and C164. The 233-residue stretch at 143–375 folds into the Radical SAM core domain; the sequence is QAKGPTAFVS…QECIRKQAMK (233 aa). Residues 378 to 441 form the TRAM domain; it reads QAMKGTVQCI…SNSLRGELIS (64 aa).

The protein belongs to the methylthiotransferase family. MiaB subfamily. Monomer. The cofactor is [4Fe-4S] cluster.

The protein localises to the cytoplasm. The enzyme catalyses N(6)-dimethylallyladenosine(37) in tRNA + (sulfur carrier)-SH + AH2 + 2 S-adenosyl-L-methionine = 2-methylsulfanyl-N(6)-dimethylallyladenosine(37) in tRNA + (sulfur carrier)-H + 5'-deoxyadenosine + L-methionine + A + S-adenosyl-L-homocysteine + 2 H(+). Functionally, catalyzes the methylthiolation of N6-(dimethylallyl)adenosine (i(6)A), leading to the formation of 2-methylthio-N6-(dimethylallyl)adenosine (ms(2)i(6)A) at position 37 in tRNAs that read codons beginning with uridine. The chain is tRNA-2-methylthio-N(6)-dimethylallyladenosine synthase from Baumannia cicadellinicola subsp. Homalodisca coagulata.